A 335-amino-acid polypeptide reads, in one-letter code: tRNA (guanine(6)-N2)-methyltransferase (335 aa).

Residues 47 to 150 (EALGLRLAHH…GEEAFLGVQL (104 aa)) enclose the THUMP domain. S-adenosyl-L-methionine contacts are provided by residues 195 to 197 (SGT), 243 to 244 (DA), and asparagine 260.

This sequence belongs to the methyltransferase superfamily. Monomer in solution.

The protein localises to the cytoplasm. It carries out the reaction guanosine(6) in tRNA + S-adenosyl-L-methionine = N(2)-methylguanosine(6) in tRNA + S-adenosyl-L-homocysteine + H(+). Functionally, S-adenosyl-L-methionine-dependent methyltransferase that catalyzes the methylation of the guanosine nucleotide at position 6 (m2G6) in tRNA(Phe). The sequence is that of tRNA (guanine(6)-N2)-methyltransferase from Thermus thermophilus (strain ATCC BAA-163 / DSM 7039 / HB27).